The chain runs to 192 residues: Putative integrase/recombinase y4gC (192 aa).

The region spanning 1–183 (MPSILERDQI…ATEDLRAIAL (183 aa)) is the Tyr recombinase domain. Catalysis depends on residues R41, K66, H135, R138, and H161. Y170 serves as the catalytic O-(3'-phospho-DNA)-tyrosine intermediate.

It belongs to the 'phage' integrase family.

This chain is Putative integrase/recombinase y4gC, found in Sinorhizobium fredii (strain NBRC 101917 / NGR234).